We begin with the raw amino-acid sequence, 267 residues long: Aliphatic sulfonates import ATP-binding protein SsuB 1 (267 aa).

An ABC transporter domain is found at 35–249 (VRVRGLRRVF…RRADPAFDRL (215 aa)). 67–74 (GRSGSGKS) provides a ligand contact to ATP.

Belongs to the ABC transporter superfamily. Aliphatic sulfonates importer (TC 3.A.1.17.2) family. As to quaternary structure, the complex is composed of two ATP-binding proteins (SsuB), two transmembrane proteins (SsuC) and a solute-binding protein (SsuA).

It localises to the cell membrane. The enzyme catalyses ATP + H2O + aliphatic sulfonate-[sulfonate-binding protein]Side 1 = ADP + phosphate + aliphatic sulfonateSide 2 + [sulfonate-binding protein]Side 1.. Part of the ABC transporter complex SsuABC involved in aliphatic sulfonates import. Responsible for energy coupling to the transport system. The protein is Aliphatic sulfonates import ATP-binding protein SsuB 1 of Frankia alni (strain DSM 45986 / CECT 9034 / ACN14a).